Consider the following 132-residue polypeptide: Small ribosomal subunit protein uS8 (132 aa).

Belongs to the universal ribosomal protein uS8 family. As to quaternary structure, part of the 30S ribosomal subunit. Contacts proteins S5 and S12.

Functionally, one of the primary rRNA binding proteins, it binds directly to 16S rRNA central domain where it helps coordinate assembly of the platform of the 30S subunit. The chain is Small ribosomal subunit protein uS8 from Bacillus anthracis (strain A0248).